Reading from the N-terminus, the 442-residue chain is Methionine aminopeptidase 2 (442 aa).

Residues 1–81 (MAAQAPTEAL…APTAQSDPPR (81 aa)) form a disordered region. Basic residues predominate over residues 56 to 72 (PLRRRRRRRRTRKKKKA). Histidine 196 lines the substrate pocket. 3 residues coordinate a divalent metal cation: aspartate 216, aspartate 227, and histidine 296. Residue histidine 304 participates in substrate binding. The a divalent metal cation site is built by glutamate 329 and glutamate 423.

This sequence belongs to the peptidase M24A family. Methionine aminopeptidase eukaryotic type 2 subfamily. It depends on Co(2+) as a cofactor. Zn(2+) serves as cofactor. The cofactor is Mn(2+). Requires Fe(2+) as cofactor.

It is found in the cytoplasm. It catalyses the reaction Release of N-terminal amino acids, preferentially methionine, from peptides and arylamides.. In terms of biological role, cotranslationally removes the N-terminal methionine from nascent proteins. The N-terminal methionine is often cleaved when the second residue in the primary sequence is small and uncharged (Met-Ala-, Cys, Gly, Pro, Ser, Thr, or Val). This Verticillium alfalfae (strain VaMs.102 / ATCC MYA-4576 / FGSC 10136) (Verticillium wilt of alfalfa) protein is Methionine aminopeptidase 2.